Here is a 461-residue protein sequence, read N- to C-terminus: Protein-serine O-palmitoleoyltransferase porcupine (461 aa).

The Cytoplasmic segment spans residues 1–17; it reads MATFSRQEFFQQLLQGC. A helical membrane pass occupies residues 18 to 38; the sequence is LLPTVQQGLDQIWLLLTICFA. Residues 39-66 lie on the Extracellular side of the membrane; sequence CRLLWRLGLPSYLKHASTVAGGFFSLYH. The chain crosses the membrane as a helical span at residues 67-87; that stretch reads FFQLHMVWVVLLSLLCYLVLF. At 88–95 the chain is on the cytoplasmic side; it reads LCRHSSHR. Residues 96–116 traverse the membrane as a helical segment; the sequence is GVFLSVTILIYLLMGEMHMVD. Over 117-152 the chain is Extracellular; the sequence is TVTWHKMRGAQMIVAMKAVSLGFDLDRGEVGAVPSP. The chain crosses the membrane as a helical span at residues 153-173; it reads VEFMGYLYFVGTIVFGPWISF. The Cytoplasmic portion of the chain corresponds to 174–198; the sequence is HSYLQAVQGRPLSRRWLKKVARSLA. The chain crosses the membrane as a helical span at residues 199–219; that stretch reads LALLCLVLSTCVGPYLFPYFI. The Extracellular portion of the chain corresponds to 220–252; the sequence is PLDGDRLLRNKKRKARGTMVRWLRAYESAVSFH. The helical transmembrane segment at 253-273 threads the bilayer; sequence FSNYFVGFLSEATATLAGAGF. Residues 274–337 lie on the Cytoplasmic side of the membrane; it reads TEEKDHLEWD…SAVLVTYAAS (64 aa). A helical membrane pass occupies residues 338–358; sequence ALLHGFSFHLAAVLLSLAFIT. H341 is a catalytic residue. Residues 359 to 396 are Extracellular-facing; sequence YVEHVLRKRLAQILSACILSKRCLPDCSHRHRLGLGVR. Residues 397 to 417 form a helical membrane-spanning segment; that stretch reads ALNLLFGALAIFHLSYLGSLF. Over 418–461 the chain is Cytoplasmic; that stretch reads DVDVDDTTEEQGYGMAYTVHKWSELSWASHWVTFGCWIFYRLIG.

Belongs to the membrane-bound acyltransferase family. Porcupine subfamily. As to quaternary structure, interacts with WNT1, WNT3, WNT3A, WNT4, WNT5A, WNT5B, WNT6, WNT7A and WNT7B. Expressed in brain, heart, kidney, liver, lung, muscle, spleen and testis. Isoform 4 is strongly expressed in kidney, liver, lung, spleen and testis. Isoform 1 is strongly expressed in brain, heart and muscle and poorly in kidney, liver, lung, spleen and testis.

The protein resides in the endoplasmic reticulum membrane. The catalysed reaction is [Wnt protein]-L-serine + (9Z)-hexadecenoyl-CoA = [Wnt protein]-O-(9Z)-hexadecenoyl-L-serine + CoA. Its function is as follows. Protein-serine O-palmitoleoyltransferase that acts as a key regulator of the Wnt signaling pathway by mediating the attachment of palmitoleate, a 16-carbon monounsaturated fatty acid (C16:1(9Z)), to Wnt proteins. Serine palmitoleoylation of WNT proteins is required for efficient binding to frizzled receptors. The polypeptide is Protein-serine O-palmitoleoyltransferase porcupine (Mus musculus (Mouse)).